Consider the following 73-residue polypeptide: STKNGRDSNSQRLGVKVYGNQPVKAGGIVVRQRGLTFKPGNSMKVGKDYTLFSCKDGIVQFETNGKTKFVHVY.

The protein belongs to the bacterial ribosomal protein bL27 family.

It localises to the plastid. It is found in the chloroplast. In Haptolina hirta (Plankton alga), this protein is Large ribosomal subunit protein bL27c (rpl27).